A 138-amino-acid polypeptide reads, in one-letter code: Basic phospholipase A2 homolog acutohaemolysin (138 aa).

An N-terminal signal peptide occupies residues 1–16 (MRALWIVAVLLVGVEG). Cystine bridges form between cysteine 42-cysteine 131, cysteine 44-cysteine 60, cysteine 59-cysteine 111, cysteine 65-cysteine 138, cysteine 66-cysteine 104, cysteine 73-cysteine 97, and cysteine 91-cysteine 102. The segment at 121-133 (KSFRYHLKPSCKK) is important for membrane-damaging activities in eukaryotes and bacteria; heparin-binding.

Monomer. In terms of tissue distribution, expressed by the venom gland.

The protein resides in the secreted. In terms of biological role, snake venom phospholipase A2 homolog that lacks enzymatic activity. Is myotoxic. Has a strong indirect hemolytic activity and anticoagulant activity. A model of myotoxic mechanism has been proposed: an apo Lys49-PLA2 is activated by the entrance of a hydrophobic molecule (e.g. fatty acid) at the hydrophobic channel of the protein leading to a reorientation of a monomer. This reorientation causes a transition between 'inactive' to 'active' states, causing alignment of C-terminal and membrane-docking sites (MDoS) side-by-side and putting the membrane-disruption sites (MDiS) in the same plane, exposed to solvent and in a symmetric position for both monomers. The MDoS region stabilizes the toxin on membrane by the interaction of charged residues with phospholipid head groups. Subsequently, the MDiS region destabilizes the membrane with penetration of hydrophobic residues. This insertion causes a disorganization of the membrane, allowing an uncontrolled influx of ions (i.e. calcium and sodium), and eventually triggering irreversible intracellular alterations and cell death. The protein is Basic phospholipase A2 homolog acutohaemolysin of Deinagkistrodon acutus (Hundred-pace snake).